The primary structure comprises 247 residues: ATP synthase subunit a, chloroplastic (247 aa).

The next 5 helical transmembrane spans lie at 38 to 58 (QVLI…SIAV), 95 to 115 (VPFI…GALL), 134 to 154 (INTT…AGLT), 199 to 219 (LVVV…VMFL), and 220 to 240 (GLFT…AYIG).

It belongs to the ATPase A chain family. In terms of assembly, F-type ATPases have 2 components, CF(1) - the catalytic core - and CF(0) - the membrane proton channel. CF(1) has five subunits: alpha(3), beta(3), gamma(1), delta(1), epsilon(1). CF(0) has four main subunits: a, b, b' and c.

It localises to the plastid. The protein resides in the chloroplast thylakoid membrane. In terms of biological role, key component of the proton channel; it plays a direct role in the translocation of protons across the membrane. This chain is ATP synthase subunit a, chloroplastic, found in Eucalyptus globulus subsp. globulus (Tasmanian blue gum).